The chain runs to 156 residues: Mitochondrial translation release factor in rescue (156 aa).

Residues 44–108 (EEELEEQFVR…LREKLEVAYK (65 aa)) form a GGQ domain region. A GGQ motif is present at residues 58 to 60 (GGQ). A coiled-coil region spans residues 100 to 141 (REKLEVAYKGEESELLKMKKESMQKKQDKRRKVNENIEKKRR). Composition is skewed to basic and acidic residues over residues 114–125 (LLKMKKESMQKK) and 132–156 (VNEN…DKST). The tract at residues 114–156 (LLKMKKESMQKKQDKRRKVNENIEKKRRFKEMLNSKQEDDKST) is disordered.

This sequence belongs to the prokaryotic/mitochondrial release factor family. Interacts (via C-terminus) with MTRES1 (via S4 domain). Associates with mitoribosomal S39 large subunit, peptidyl tRNA and nascent chain.

The protein localises to the mitochondrion. In terms of biological role, part of a mitoribosome-associated quality control pathway that prevents aberrant translation by responding to interruptions during elongation. As heterodimer with MTRES1, ejects the unfinished nascent chain and peptidyl transfer RNA (tRNA), respectively, from stalled ribosomes. Recruitment of mitoribosome biogenesis factors to these quality control intermediates suggests additional roles for MTRES1 and MTRF during mitoribosome rescue. The protein is Mitochondrial translation release factor in rescue (mtrfr) of Danio rerio (Zebrafish).